The following is a 232-amino-acid chain: Vacuolar iron transporter homolog 1 (232 aa).

At 1–59 (MAIDLGCHVGCASPETKQEETADPTAAPVVVDDVEAAAGGRRPGDGGGVNYVARAQWLR) the chain is on the cytoplasmic side. A helical transmembrane segment spans residues 60-80 (AAVLGANDGLVSVASLMVGVG). Residues 81–89 (AANGTRRAM) lie on the Vacuolar side of the membrane. A helical transmembrane segment spans residues 90–110 (LVSGLAGLVAGACSMAIGEFV). The Cytoplasmic segment spans residues 111 to 148 (SVYAQCDIQAAQIERARGGKDADGGEEEEELPSPTMAA). A helical transmembrane segment spans residues 149 to 169 (VASALSFAAGAALPLLAGGFV). Residues 170–175 (RPWAAR) lie on the Vacuolar side of the membrane. A helical transmembrane segment spans residues 176–196 (VAAVCAASSLGLAGFGVASAY). Topologically, residues 197 to 208 (LGGAGVARSGVR) are cytoplasmic. A helical membrane pass occupies residues 209 to 229 (MLVGGWLAMAVTYGVLKLFGM). The Vacuolar portion of the chain corresponds to 230–232 (HGV).

Belongs to the CCC1 family.

Its subcellular location is the vacuole membrane. It carries out the reaction Fe(2+)(in) = Fe(2+)(out). In terms of biological role, probable vacuolar iron transporter that may be involved in the regulation of iron distribution throughout the plant. The polypeptide is Vacuolar iron transporter homolog 1 (Oryza sativa subsp. japonica (Rice)).